A 587-amino-acid polypeptide reads, in one-letter code: Folylpolyglutamate synthase, mitochondrial (587 aa).

The N-terminal 42 residues, 1 to 42 (MSWARSRLCSTLSLAAVSARGATTEGAARRGMSAWPAPQEPG), are a transit peptide targeting the mitochondrion. Residue 106–109 (GKGS) coordinates ATP. Mg(2+) is bound by residues serine 130, glutamate 200, and histidine 228. 2 residues coordinate ATP: arginine 363 and aspartate 377. Serine 539 bears the Phosphoserine mark.

It belongs to the folylpolyglutamate synthase family. In terms of assembly, monomer. A monovalent cation serves as cofactor. As to expression, with non-specific probe, highest content in kidney and liver and lowest in spleen, lung and small intestine, and readily detectable in all of the tumors except hepatoma. Isoform 1 and isoform 2 expressed in leukemic cells and isoform 4 and isoform 5 in liver cells. Isoform 1 and isoform 2 exclusively expressed in hepatoma and Lewis lung carcinoma. Isoform 1 and isoform 2 also expressed in bone marrow, small intestine and spleen. Kidney expresses isoform 1, isoform 2, isoform 4 and isoform 5.

It localises to the mitochondrion inner membrane. The protein resides in the mitochondrion matrix. Its subcellular location is the cytoplasm. It carries out the reaction (6S)-5,6,7,8-tetrahydrofolyl-(gamma-L-Glu)(n) + L-glutamate + ATP = (6S)-5,6,7,8-tetrahydrofolyl-(gamma-L-Glu)(n+1) + ADP + phosphate + H(+). The protein operates within cofactor biosynthesis; tetrahydrofolylpolyglutamate biosynthesis. With respect to regulation, inhibited by ammonium sulfate. Inhibited by pentaglutamate derivative of DDATHF, but isoform 2 is inhibited to a greater extent at lower concentrations of the compound that is isoform 5. Isoform 5 is virtually unaffected by H(4)PteGlu(5) and 5,10-CH(2)-H(4)PteGlu(5) at concentrations that substantially inhibits the activity of isoform 2. Isoform 2 and 5 are equally sensitive to polyglutamates of 10-CHO-H(4)-PteGlu. In terms of biological role, catalyzes conversion of folates to polyglutamate derivatives allowing concentration of folate compounds in the cell and the intracellular retention of these cofactors, which are important substrates for most of the folate-dependent enzymes that are involved in one-carbon transfer reactions involved in purine, pyrimidine and amino acid synthesis. Dihydrofolate, tetrahydrofolate, 5,10-methylenetetrahydrofolate, 10-formyltetrahydrofolate and 5-formyltetrahydrofolate are the best substrates. Folic acid and 5-methyltetrahydrofolate can also act as substrates. The polypeptide is Folylpolyglutamate synthase, mitochondrial (Fpgs) (Mus musculus (Mouse)).